The chain runs to 101 residues: NADH-quinone oxidoreductase subunit K (101 aa).

The next 3 helical transmembrane spans lie at 4–24 (LSHY…GIFL), 30–50 (IVLL…FIAF), and 61–81 (VFVF…LAIL).

Belongs to the complex I subunit 4L family. As to quaternary structure, NDH-1 is composed of 14 different subunits. Subunits NuoA, H, J, K, L, M, N constitute the membrane sector of the complex.

The protein resides in the cell inner membrane. The enzyme catalyses a quinone + NADH + 5 H(+)(in) = a quinol + NAD(+) + 4 H(+)(out). In terms of biological role, NDH-1 shuttles electrons from NADH, via FMN and iron-sulfur (Fe-S) centers, to quinones in the respiratory chain. The immediate electron acceptor for the enzyme in this species is believed to be ubiquinone. Couples the redox reaction to proton translocation (for every two electrons transferred, four hydrogen ions are translocated across the cytoplasmic membrane), and thus conserves the redox energy in a proton gradient. The chain is NADH-quinone oxidoreductase subunit K from Methylovorus glucosotrophus (strain SIP3-4).